Consider the following 322-residue polypeptide: Thioredoxin reductase (322 aa).

FAD is bound by residues 12-15 (SGPA), 34-42 (EGAVTAGGA), N51, and V84. A disulfide bridge links C136 with C139. NADP(+) is bound by residues H176, R182, and Y259. FAD contacts are provided by residues D279 and 286-289 (RQAI). R286 is an NADP(+) binding site.

This sequence belongs to the class-II pyridine nucleotide-disulfide oxidoreductase family. In terms of assembly, homodimer. FAD serves as cofactor.

The enzyme catalyses [thioredoxin]-dithiol + NADP(+) = [thioredoxin]-disulfide + NADPH + H(+). Its function is as follows. Component of the thioredoxin-thioredoxin reductase system which may be involved in biosynthesis of penicillins and cephalosporins and may be important in determining the thiol-disulfide redox balance. The chain is Thioredoxin reductase from Streptomyces clavuligerus.